The following is a 201-amino-acid chain: Histidinol dehydrogenase (201 aa).

The protein belongs to the histidinol dehydrogenase family. Homodimer. Zn(2+) is required as a cofactor.

The catalysed reaction is L-histidinol + 2 NAD(+) + H2O = L-histidine + 2 NADH + 3 H(+). The protein operates within amino-acid biosynthesis; L-histidine biosynthesis; L-histidine from 5-phospho-alpha-D-ribose 1-diphosphate: step 9/9. In terms of biological role, catalyzes the sequential NAD-dependent oxidations of L-histidinol to L-histidinaldehyde and then to L-histidine. The protein is Histidinol dehydrogenase (hisD) of Buchnera aphidicola subsp. Diuraphis noxia.